Here is a 372-residue protein sequence, read N- to C-terminus: Chorismate synthase (372 aa).

Residues R48 and R54 each contribute to the NADP(+) site. Residues 125 to 127, 238 to 239, G278, 293 to 297, and R319 each bind FMN; these read RSS, NA, and KPTSS.

This sequence belongs to the chorismate synthase family. As to quaternary structure, homotetramer. FMNH2 is required as a cofactor.

The enzyme catalyses 5-O-(1-carboxyvinyl)-3-phosphoshikimate = chorismate + phosphate. Its pathway is metabolic intermediate biosynthesis; chorismate biosynthesis; chorismate from D-erythrose 4-phosphate and phosphoenolpyruvate: step 7/7. Catalyzes the anti-1,4-elimination of the C-3 phosphate and the C-6 proR hydrogen from 5-enolpyruvylshikimate-3-phosphate (EPSP) to yield chorismate, which is the branch point compound that serves as the starting substrate for the three terminal pathways of aromatic amino acid biosynthesis. This reaction introduces a second double bond into the aromatic ring system. This Xylella fastidiosa (strain 9a5c) protein is Chorismate synthase.